We begin with the raw amino-acid sequence, 504 residues long: Deoxyguanosinetriphosphate triphosphohydrolase (504 aa).

The HD domain maps to 66–273; sequence RLTHSMEVQQ…MEAADDISYC (208 aa).

This sequence belongs to the dGTPase family. Type 1 subfamily. Homotetramer. It depends on Mg(2+) as a cofactor.

The catalysed reaction is dGTP + H2O = 2'-deoxyguanosine + triphosphate + H(+). DGTPase preferentially hydrolyzes dGTP over the other canonical NTPs. The protein is Deoxyguanosinetriphosphate triphosphohydrolase of Citrobacter koseri (strain ATCC BAA-895 / CDC 4225-83 / SGSC4696).